The chain runs to 164 residues: Phosphopantetheine adenylyltransferase (164 aa).

Position 9 (Thr-9) interacts with substrate. ATP-binding positions include 9 to 10 (TF) and His-17. Substrate contacts are provided by Lys-41, Thr-76, and Arg-90. ATP contacts are provided by residues 91–93 (GLR), Glu-101, and 126–132 (YQFVSSS).

The protein belongs to the bacterial CoaD family. Homohexamer. The cofactor is Mg(2+).

Its subcellular location is the cytoplasm. It catalyses the reaction (R)-4'-phosphopantetheine + ATP + H(+) = 3'-dephospho-CoA + diphosphate. The protein operates within cofactor biosynthesis; coenzyme A biosynthesis; CoA from (R)-pantothenate: step 4/5. Its function is as follows. Reversibly transfers an adenylyl group from ATP to 4'-phosphopantetheine, yielding dephospho-CoA (dPCoA) and pyrophosphate. The chain is Phosphopantetheine adenylyltransferase from Coprothermobacter proteolyticus (strain ATCC 35245 / DSM 5265 / OCM 4 / BT).